The sequence spans 86 residues: Apolipoprotein C-I (86 aa).

An N-terminal signal peptide occupies residues 1 to 26; it reads MRLFLSLPVLVVALLTILEGPGPAQG.

This sequence belongs to the apolipoprotein C1 family.

It localises to the secreted. Inhibitor of lipoprotein binding to the low density lipoprotein (LDL) receptor, LDL receptor-related protein, and very low density lipoprotein (VLDL) receptor. Associates with high density lipoproteins (HDL) and the triacylglycerol-rich lipoproteins in the plasma and makes up about 10% of the protein of the VLDL and 2% of that of HDL. Appears to interfere directly with fatty acid uptake and is also the major plasma inhibitor of cholesteryl ester transfer protein (CETP). Binds free fatty acids and reduces their intracellular esterification. Modulates the interaction of APOE with beta-migrating VLDL and inhibits binding of beta-VLDL to the LDL receptor-related protein. In Plecturocebus moloch (Dusky titi monkey), this protein is Apolipoprotein C-I (APOC1).